A 164-amino-acid polypeptide reads, in one-letter code: FMN reductase (NADH) RutF (164 aa).

The protein belongs to the non-flavoprotein flavin reductase family. RutF subfamily.

The catalysed reaction is FMNH2 + NAD(+) = FMN + NADH + 2 H(+). Its function is as follows. Catalyzes the reduction of FMN to FMNH2 which is used to reduce pyrimidine by RutA via the Rut pathway. In Escherichia coli (strain K12 / MC4100 / BW2952), this protein is FMN reductase (NADH) RutF.